Consider the following 234-residue polypeptide: Heme-copper oxidase subunit 2 (234 aa).

2 consecutive transmembrane segments (helical) span residues 13-33 and 72-92; these read LFLLFTAVGVLAAGTVTAFFI and LLFVTGIIVMGLIVATIDETL. Cu cation contacts are provided by histidine 151, cysteine 188, cysteine 192, and histidine 196.

It belongs to the cytochrome c oxidase subunit 2 family.

The protein resides in the cell membrane. This chain is Heme-copper oxidase subunit 2 (aoxA), found in Aeropyrum pernix (strain ATCC 700893 / DSM 11879 / JCM 9820 / NBRC 100138 / K1).